Here is a 398-residue protein sequence, read N- to C-terminus: Succinate--CoA ligase [ADP-forming] subunit beta (398 aa).

Positions 9–254 (KALLHEFGVP…ETEEDAKEIE (246 aa)) constitute an ATP-grasp domain. Residues lysine 46, 53-55 (GRG), glutamate 109, serine 112, and glutamate 117 each bind ATP. Positions 209 and 223 each coordinate Mg(2+). Residues asparagine 274 and 331–333 (GIM) contribute to the substrate site.

It belongs to the succinate/malate CoA ligase beta subunit family. In terms of assembly, heterotetramer of two alpha and two beta subunits. Requires Mg(2+) as cofactor.

It carries out the reaction succinate + ATP + CoA = succinyl-CoA + ADP + phosphate. It catalyses the reaction GTP + succinate + CoA = succinyl-CoA + GDP + phosphate. Its pathway is carbohydrate metabolism; tricarboxylic acid cycle; succinate from succinyl-CoA (ligase route): step 1/1. In terms of biological role, succinyl-CoA synthetase functions in the citric acid cycle (TCA), coupling the hydrolysis of succinyl-CoA to the synthesis of either ATP or GTP and thus represents the only step of substrate-level phosphorylation in the TCA. The beta subunit provides nucleotide specificity of the enzyme and binds the substrate succinate, while the binding sites for coenzyme A and phosphate are found in the alpha subunit. This Bradyrhizobium sp. (strain BTAi1 / ATCC BAA-1182) protein is Succinate--CoA ligase [ADP-forming] subunit beta.